Reading from the N-terminus, the 318-residue chain is NADH-ubiquinone oxidoreductase chain 1 (318 aa).

The next 8 helical transmembrane spans lie at 2 to 22, 70 to 90, 100 to 120, 136 to 156, 172 to 192, 222 to 242, 253 to 273, and 294 to 314; these read FMIN…FLTL, MFII…SPLP, LGVL…LWSG, VAQT…VLLM, LWLL…TLAE, LFFL…AILF, ELYT…FLWI, and LPLT…TASI.

Belongs to the complex I subunit 1 family. As to quaternary structure, core subunit of respiratory chain NADH dehydrogenase (Complex I) which is composed of 45 different subunits.

The protein resides in the mitochondrion inner membrane. It carries out the reaction a ubiquinone + NADH + 5 H(+)(in) = a ubiquinol + NAD(+) + 4 H(+)(out). In terms of biological role, core subunit of the mitochondrial membrane respiratory chain NADH dehydrogenase (Complex I) which catalyzes electron transfer from NADH through the respiratory chain, using ubiquinone as an electron acceptor. Essential for the catalytic activity and assembly of complex I. This is NADH-ubiquinone oxidoreductase chain 1 (MT-ND1) from Balaenoptera musculus (Blue whale).